Reading from the N-terminus, the 2249-residue chain is Endoribonuclease Dcr-1 (2249 aa).

Residues 1 to 371 (MAFHWCDNNL…SPKVRRLLQT (371 aa)) are essential for miRNA substrate recognition. The interval 1–690 (MAFHWCDNNL…SKQPPTACDI (690 aa)) is important for interaction with loqs isoform PB (loqs-PB). Residues 1-761 (MAFHWCDNNL…AEIDTAHSLA (761 aa)) are helicase domain. Residues 1-1042 (MAFHWCDNNL…VSLELAKERV (1042 aa)) form a necessary for processing certain pre-miRNas, such as pre-let 7 and pre-bantam region. 37–44 (LGHRSSKE) provides a ligand contact to ATP. The segment at 371–491 (TLRCFKPEEV…HHRDHNDGSD (121 aa)) is dispensable for activity and substrate recognition. The tract at residues 436 to 486 (TTEDRQTNRSAARVTPTPTPAHAKPKPSSGANTAQPRTRRRVYTRRHHRDH) is disordered. A compositionally biased stretch (basic residues) spans 472–484 (RTRRRVYTRRHHR). A Helicase C-terminal domain is found at 485–648 (DHNDGSDTLC…TGDTTEADSD (164 aa)). The essential for miRNA substrate recognition stretch occupies residues 496 to 606 (LIYCNQNHTA…VQCKGRARAA (111 aa)). The dispensable for activity and substrate recognition stretch occupies residues 617–761 (SYKSPTVGSV…AEIDTAHSLA (145 aa)). 2 disordered regions span residues 640-665 (GDTTEADSDSDDSAMPNSSGSDPYTF) and 705-757 (LDTS…IDTA). The span at 716 to 726 (SMSNTSPSESS) shows a compositional bias: low complexity. The Dicer dsRNA-binding fold domain occupies 825–920 (AIALVNKYCA…QPIGKEGFRA (96 aa)). A wing domain region spans residues 924–957 (DWECFELEPEDEQIVQLSDEPRPGTTKRRQYYYK). The tract at residues 963–1108 (FCDCRPVAGA…WQFLELIQAN (146 aa)) is platform domain. The PAZ domain maps to 1100–1246 (QFLELIQANG…LVPELCTVHP (147 aa)). The essential for production of mature miRNAs from pre-miRNAs. Also important for proper formation of the siRISC complex but is dispensable for biogenesis of siRNAs stretch occupies residues 1147-2249 (QYFYVAEICP…KKQGLIAKKD (1103 aa)). The segment at 1314-1351 (ESKQKESLKDDTINGKDLADVEKKPTSEETQLDKDSKD) is disordered. Ser-1423 carries the post-translational modification Phosphoserine. Residues 1426–1477 (FWDVSNGESGFKGPKSSQNKQGGKGKAKGPAKPTFNYYDSDNSLGSSYDDDD) form a disordered region. Residues 1437–1446 (KGPKSSQNKQ) show a composition bias toward low complexity. Polar residues predominate over residues 1462–1471 (YYDSDNSLGS). RNase III domains are found at residues 1698–1919 (ITSA…IECG) and 1993–2150 (FEEF…LDSN). Mg(2+) contacts are provided by Glu-1745 and Asp-1749. A phosphoserine mark is found at Ser-1877 and Ser-1880. Asp-1905, Glu-1908, Glu-2032, Asp-2136, and Glu-2139 together coordinate Mg(2+). Residues 2175-2241 (VPKSPIRELL…AKCALRQLKK (67 aa)) form the DRBM domain.

Belongs to the helicase family. Dicer subfamily. As to quaternary structure, component of the miRNA-directed RISC loading complex (miRLC), composed of at least Dcr-1, AGO1 and loqs, which processes pre-miRNAs and loads the resulting miRNAs into the Argonaute 1 (AGO1)-containing RNA-induced silencing complex (miRISC). Interacts (via helicase domain) with dicing cofactor loqs isoform-PB (loqs-PB) (via DRBM 3 domain); this interaction enhances processing of pre-miRNAs by increasing substrate binding affinity of the dicer. Also able to interact with loqs isoforms PA and PC, however the relevance of such interactions are unclear in vivo. Different regions of the Dcr-1-loqs-PB heterodimer collaborate to recognize, bind and position the pre-miRNA for Dcr-1 mediated cleavage. In the absence of authentic miRNA substrates, the heterodimer favors a closed, catalytically incompetent, conformation, whereas binding of authentic pre-miRNA substrates stabilizes the relatively rare open, catalytically competent, conformation of the heterodimer. During substrate recognition, the Dcr-1 PAZ domain and pre-miRNA interact with the DRBM 1 domain of loqs-PB, which likely contributes to substrate recognition and stabilization. At the miRNA binding stage, the Dcr-1 DRBM domain and loqs-PB DRBM domains then bind the pre-miRNA in tandem to form a tight 'belt' around the pre-miRNA stem, the pre-miRNA loop is docked in the loop-binding region formed by DUF283, DRBM and part of the N terminus of Dcr-1, and the loqs-PB DRBM 1 and the wing domain of Dcr-1 act together to bind the 5' and 3' pre-miRNA termini within the PAZ and platform domains of Dcr-1. These interactions between the proteins and their pre-miRNA substrate stabilize a distorted form of the pre-miRNA and position the scissile phosphodiester bonds of the pre-miRNA at the RNase III catalytic cleavage sites of Dcr-1. Following Dcr-1 mediated cleavage, the miRNA duplex remains bound to loqs-PB DRBM 1, which dissociates from the Dcr-1 RNase III 1 domain but remains in contact with the PAZ and wing domains, suggesting that the heterodimer presents the mature miRNA to Ago2 for loading into the RNA-induced silencing complex (miRISC). Interacts with AGO2 and Fmr1 to form a RNA-induced silencing complex (siRISC), a ribonucleoprotein (RNP) complex involved in translation regulation; other components of the complex are RpL5, RpL11, AGO2 and Rm62. Interacts with piwi and vas; these interactions occur in the polar granules. It depends on Mg(2+) as a cofactor. Requires Mn(2+) as cofactor.

The protein localises to the cytoplasm. It localises to the cytosol. It carries out the reaction Endonucleolytic cleavage to 5'-phosphomonoester.. Its activity is regulated as follows. Activity towards pre-miRNAs is not inhibited by inorganic phosphate. In terms of biological role, endoribonuclease which functions in microRNA- (miRNA) gene silencing and, independently of its ribonuclease III activity, also acts in the short interfering RNA- (siRNA) gene silencing pathway. Cleaves hairpin precursor miRNAs (pre-miRNA) to generate mature miRNAs (miRNAs) that are between twenty-one to twenty-four nucleotides in length and function in RNA silencing and post-transcriptional regulation of gene expression. Also functions in miRNA loading and assembly of the Argonaute 1 (AGO1)-containing RNA-induced silencing complex (miRISC), with the miRNAs serving as a guide to direct the miRISC to complementary RNAs to degrade them or prevent their translation. Independently of its catalytic activity, functions in the siRNA silencing pathway by promoting assembly of the siRNA-directed Argonaute 2 (AGO2)-containing RISC (siRISC). Required for the proper formation of a stable intermediate (R2) in siRISC assembly, which is formed from the R1 precursor complex (containing Dcr-2, R2D2 and the siRNA) and is used for assembly of the mature (R3) siRISC complex. It is not required for siRNA biogenesis. During embryogenesis, involved in germline fate determination. Post-transcriptionally regulates mei-P26 expression through the microRNA pathway, which in turn post-translationally regulates myc protein levels; involved in regulating cell and tissue growth. This is Endoribonuclease Dcr-1 from Drosophila melanogaster (Fruit fly).